Reading from the N-terminus, the 135-residue chain is Large ribosomal subunit protein bL17 (135 aa).

The protein belongs to the bacterial ribosomal protein bL17 family. In terms of assembly, part of the 50S ribosomal subunit. Contacts protein L32.

The protein is Large ribosomal subunit protein bL17 of Rhodopseudomonas palustris (strain BisB18).